A 233-amino-acid polypeptide reads, in one-letter code: Small ribosomal subunit protein uS5 (233 aa).

Over residues Met1–Ser13 the composition is skewed to polar residues. A disordered region spans residues Met1–Asn40. Residues Asn15 to Asn40 are compositionally biased toward basic and acidic residues. Residues Leu45 to Val108 form the S5 DRBM domain.

It belongs to the universal ribosomal protein uS5 family. Part of the 30S ribosomal subunit. Contacts proteins S4 and S8.

Functionally, with S4 and S12 plays an important role in translational accuracy. In terms of biological role, located at the back of the 30S subunit body where it stabilizes the conformation of the head with respect to the body. The sequence is that of Small ribosomal subunit protein uS5 from Bifidobacterium longum (strain NCC 2705).